Consider the following 387-residue polypeptide: 3-ketoacyl-CoA thiolase (387 aa).

Catalysis depends on cysteine 91, which acts as the Acyl-thioester intermediate. Residues histidine 343 and cysteine 373 each act as proton acceptor in the active site.

This sequence belongs to the thiolase-like superfamily. Thiolase family. Heterotetramer of two alpha chains (FadB) and two beta chains (FadA).

It localises to the cytoplasm. The enzyme catalyses an acyl-CoA + acetyl-CoA = a 3-oxoacyl-CoA + CoA. It participates in lipid metabolism; fatty acid beta-oxidation. Functionally, catalyzes the final step of fatty acid oxidation in which acetyl-CoA is released and the CoA ester of a fatty acid two carbons shorter is formed. This chain is 3-ketoacyl-CoA thiolase, found in Vibrio vulnificus (strain YJ016).